Here is a 478-residue protein sequence, read N- to C-terminus: 3-isopropylmalate dehydratase large subunit (478 aa).

C355, C415, and C418 together coordinate [4Fe-4S] cluster.

The protein belongs to the aconitase/IPM isomerase family. LeuC type 1 subfamily. In terms of assembly, heterodimer of LeuC and LeuD. [4Fe-4S] cluster serves as cofactor.

It catalyses the reaction (2R,3S)-3-isopropylmalate = (2S)-2-isopropylmalate. Its pathway is amino-acid biosynthesis; L-leucine biosynthesis; L-leucine from 3-methyl-2-oxobutanoate: step 2/4. Catalyzes the isomerization between 2-isopropylmalate and 3-isopropylmalate, via the formation of 2-isopropylmaleate. The protein is 3-isopropylmalate dehydratase large subunit of Paracoccus denitrificans (strain Pd 1222).